Here is a 93-residue protein sequence, read N- to C-terminus: Phosphoribosyl-ATP pyrophosphatase (93 aa).

The protein belongs to the PRA-PH family.

The protein localises to the cytoplasm. It carries out the reaction 1-(5-phospho-beta-D-ribosyl)-ATP + H2O = 1-(5-phospho-beta-D-ribosyl)-5'-AMP + diphosphate + H(+). The protein operates within amino-acid biosynthesis; L-histidine biosynthesis; L-histidine from 5-phospho-alpha-D-ribose 1-diphosphate: step 2/9. This chain is Phosphoribosyl-ATP pyrophosphatase, found in Rhodococcus jostii (strain RHA1).